Consider the following 220-residue polypeptide: Probable cutinase 5 (220 aa).

The N-terminal stretch at 1-18 is a signal peptide; the sequence is MVALHTLLLTAFAAVSLA. 2 cysteine pairs are disulfide-bonded: Cys42–Cys121 and Cys68–Cys82. Catalysis depends on Ser132, which acts as the Nucleophile. Cys183 and Cys190 are disulfide-bonded. Asp187 is an active-site residue. His200 acts as the Proton donor/acceptor in catalysis.

The protein belongs to the cutinase family.

The protein resides in the secreted. It carries out the reaction cutin + H2O = cutin monomers.. Its function is as follows. Catalyzes the hydrolysis of complex carboxylic polyesters found in the cell wall of plants. Degrades cutin, a macromolecule that forms the structure of the plant cuticle. The chain is Probable cutinase 5 from Aspergillus terreus (strain NIH 2624 / FGSC A1156).